The following is a 343-amino-acid chain: Transmembrane protein 82 (343 aa).

8 consecutive transmembrane segments (helical) span residues 30–50 (GLIG…YFFV), 77–97 (LAGL…LVVL), 121–141 (LQLY…GLSF), 145–167 (GAPH…GLGA), 203–223 (LLGR…VALI), 233–252 (AMRF…IYMQ), 263–283 (SQVQ…LTVG), and 285–305 (WLDL…LVGV). The segment covering 320–333 (QRPPVSTPSQPLPS) has biased composition (pro residues). Residues 320-343 (QRPPVSTPSQPLPSAPQSQSSAPS) form a disordered region. Residues 334-343 (APQSQSSAPS) show a composition bias toward low complexity.

Belongs to the TMEM82 family.

The protein localises to the membrane. This Homo sapiens (Human) protein is Transmembrane protein 82 (TMEM82).